The primary structure comprises 331 residues: Pantothenate kinase (331 aa).

An ATP-binding site is contributed by 109-116 (GSVAVGKS).

The protein belongs to the prokaryotic pantothenate kinase family.

It is found in the cytoplasm. The catalysed reaction is (R)-pantothenate + ATP = (R)-4'-phosphopantothenate + ADP + H(+). It participates in cofactor biosynthesis; coenzyme A biosynthesis; CoA from (R)-pantothenate: step 1/5. This chain is Pantothenate kinase, found in Rhizobium etli (strain CIAT 652).